The sequence spans 113 residues: Iron-sulfur cluster insertion protein ErpA (113 aa).

3 residues coordinate iron-sulfur cluster: Cys41, Cys105, and Cys107.

It belongs to the HesB/IscA family. As to quaternary structure, homodimer. It depends on iron-sulfur cluster as a cofactor.

Its function is as follows. Required for insertion of 4Fe-4S clusters for at least IspG. In Actinobacillus pleuropneumoniae serotype 7 (strain AP76), this protein is Iron-sulfur cluster insertion protein ErpA.